We begin with the raw amino-acid sequence, 271 residues long: MPSYVITGASRGLGFEFVRQLSSDPNNTVIGLVRDKVTTEQAVAQELAGRSNIHILQADITDYEAVKDAVTATAQITGGVLDYLVANAAYISEFDAYDSIGVLGNSPKELEEDLFKSFKVNVIANVHLFNLYMPLILAGNIKKVIALSTGMADLDSTNKFELQVAPGYAISKAAMNTAIGKFHAQYKKDGVLFMSISPGVVDTGHYKNATPEQMAKVGGMFQNFVTYNPDFKGPASPEASVKDVISVWENASIEAGSGGSFVSHHGNKKWL.

NADP(+)-binding residues include leucine 13, aspartate 59, asparagine 87, tyrosine 168, lysine 172, valine 201, and threonine 203. The Proton donor role is filled by tyrosine 168. Residue lysine 172 is the Lowers pKa of active site Tyr of the active site.

This sequence belongs to the short-chain dehydrogenases/reductases (SDR) family.

Its pathway is secondary metabolite biosynthesis. Its function is as follows. Short chain dehydrogenase; part of the gene cluster that mediates the biosynthesis of virensols and trichoxide, fungal natural products that contain or are derived from a salicylaldehyde core. The pathway begins with the synthesis of the reduced chain in virensol C by the highly reducing polyketide synthase virA via condensation of one acetate and 8 malonate units. VirA has interesting programming rules since the first 2 ketides are fully reduced, the 3 following ketides undergo beta-dehydration, and the last 3 ketides are only reduced to beta-hydroxys to yield the trihydroxy portion. The production of aldehyde virensol C by virA alone is surprising, since virA does not contain a reductase (R) domain that is typically associated with reductive product release in HRPKS. The cupin-domain enzyme virC is involved in enhancing virA product turnover. The short-chain dehydrogenase virB then oxidizes the C-7 alcohol of virensol C to a ketone, yielding virensol D. Virensol D is further transformed to salicylaldehyde 5-deoxyaurocitrin by the short-chain dehydrogenase virD. VirD catalyzes the dehydrogenation of C-3 to form the beta-ketone aldehyde, which is followed by the generation of the nucleophilic C-2 that is required for the intramolecular aldol condensation between C-2 and C-7, itself followed by dehydration and aromatization which leads to salicylaldehyde 5-deoxyaurocitrin. While the dehydrogenation of virensol D is definitely catalyzed by virD, the aldol condensation and dehydration may be uncatalyzed or assisted by virD. The short chain dehydrogenase virG then converts salicylaldehyde 5-deoxyaurocitrin into virensol B which is further hydroxylated by the cytochrome P450 monooxygenase virE to yield the hydroquinone virensol A. VirI then may oxidize virensol A to form the quinone, while virH performs the epoxidation. Finally, the two remaining short-chain dehydrogenases, virK and virL, are probably responsible for reducing the ketones to the corresponding alcohols to furnish the epoxycyclohexanol structure in trichoxide. The sequence is that of Short chain dehydrogenase virK from Hypocrea virens (strain Gv29-8 / FGSC 10586) (Gliocladium virens).